The chain runs to 411 residues: Arginine deiminase (411 aa).

Cys401 (amidino-cysteine intermediate) is an active-site residue.

This sequence belongs to the arginine deiminase family.

The protein resides in the cytoplasm. It catalyses the reaction L-arginine + H2O = L-citrulline + NH4(+). It functions in the pathway amino-acid degradation; L-arginine degradation via ADI pathway; carbamoyl phosphate from L-arginine: step 1/2. The protein is Arginine deiminase of Staphylococcus epidermidis (strain ATCC 35984 / DSM 28319 / BCRC 17069 / CCUG 31568 / BM 3577 / RP62A).